A 502-amino-acid chain; its full sequence is Activin receptor type-1-like (502 aa).

The N-terminal stretch at M1–G22 is a signal peptide. Topologically, residues D23 to P119 are extracellular. N32 carries N-linked (GlcNAc...) asparagine glycosylation. 3 disulfide bridges follow: C33–C50, C35–C40, and C45–C68. A mediates specificity for BMP ligand region spans residues N72–L75. Cystine bridges form between C76–C88 and C89–C94. N97 is a glycosylation site (N-linked (GlcNAc...) asparagine). Residues L120–W140 form a helical membrane-spanning segment. Residues R141–H502 are Cytoplasmic-facing. 3 positions are modified to phosphoserine: S154, S159, and S160. One can recognise a GS domain in the interval S171–Q200. One can recognise a Protein kinase domain in the interval V201–H502. ATP-binding positions include V207–V215 and K228. The Proton acceptor role is filled by D329.

This sequence belongs to the protein kinase superfamily. TKL Ser/Thr protein kinase family. TGFB receptor subfamily. As to quaternary structure, interacts with TSC22D1/TSC-22. Requires Mg(2+) as cofactor. The cofactor is Mn(2+).

It is found in the cell membrane. The enzyme catalyses L-threonyl-[receptor-protein] + ATP = O-phospho-L-threonyl-[receptor-protein] + ADP + H(+). It carries out the reaction L-seryl-[receptor-protein] + ATP = O-phospho-L-seryl-[receptor-protein] + ADP + H(+). Type I receptor for TGF-beta family ligands BMP9/GDF2 and BMP10 and important regulator of normal blood vessel development. On ligand binding, forms a receptor complex consisting of two type II and two type I transmembrane serine/threonine kinases. Type II receptors phosphorylate and activate type I receptors which autophosphorylate, then bind and activate SMAD transcriptional regulators. May bind activin as well. In Mus musculus (Mouse), this protein is Activin receptor type-1-like (Acvrl1).